The primary structure comprises 80 residues: Gamma-conotoxin PnVIIA (80 aa).

The signal sequence occupies residues 1-19; it reads MEKLTILLLVAAVLMSTQA. The propeptide occupies 20–43; the sequence is QNQEQRQQAKINFLSKRKPSAERW. 3 disulfide bridges follow: Cys47-Cys61, Cys54-Cys65, and Cys60-Cys70. Glu59 bears the 4-carboxyglutamate mark. Glu71 bears the 4-carboxyglutamate mark. Pro76 carries the 4-hydroxyproline modification. Residues 78-80 constitute a propeptide that is removed on maturation; the sequence is FGA.

Expressed by the venom duct.

It is found in the secreted. Functionally, gamma-conotoxins may act on voltage-gated non-specific cation pacemaker channels (HCN). Triggers depolarization and firing of action potential bursts in the caudodorsal neurons of lymnaea. This effect is due to activation or enhancement of a slow inward cation current that may underlie endogenous bursting activity of these neurons. The protein is Gamma-conotoxin PnVIIA of Conus pennaceus (Feathered cone).